A 141-amino-acid polypeptide reads, in one-letter code: Large ribosomal subunit protein uL11 (141 aa).

This sequence belongs to the universal ribosomal protein uL11 family. Part of the ribosomal stalk of the 50S ribosomal subunit. Interacts with L10 and the large rRNA to form the base of the stalk. L10 forms an elongated spine to which L12 dimers bind in a sequential fashion forming a multimeric L10(L12)X complex. Post-translationally, one or more lysine residues are methylated.

In terms of biological role, forms part of the ribosomal stalk which helps the ribosome interact with GTP-bound translation factors. The protein is Large ribosomal subunit protein uL11 of Wolinella succinogenes (strain ATCC 29543 / DSM 1740 / CCUG 13145 / JCM 31913 / LMG 7466 / NCTC 11488 / FDC 602W) (Vibrio succinogenes).